We begin with the raw amino-acid sequence, 417 residues long: NADH-quinone oxidoreductase subunit D (417 aa).

Belongs to the complex I 49 kDa subunit family. NDH-1 is composed of 14 different subunits. Subunits NuoB, C, D, E, F, and G constitute the peripheral sector of the complex.

It is found in the cell inner membrane. It carries out the reaction a quinone + NADH + 5 H(+)(in) = a quinol + NAD(+) + 4 H(+)(out). Its function is as follows. NDH-1 shuttles electrons from NADH, via FMN and iron-sulfur (Fe-S) centers, to quinones in the respiratory chain. The immediate electron acceptor for the enzyme in this species is believed to be ubiquinone. Couples the redox reaction to proton translocation (for every two electrons transferred, four hydrogen ions are translocated across the cytoplasmic membrane), and thus conserves the redox energy in a proton gradient. This is NADH-quinone oxidoreductase subunit D from Burkholderia vietnamiensis (strain G4 / LMG 22486) (Burkholderia cepacia (strain R1808)).